Consider the following 211-residue polypeptide: Probable calcium-binding protein CML11 (211 aa).

Disordered regions lie at residues 1–22 (MSEPATTTPTPTPAGDHDAAAT) and 40–60 (SCSAQQQQQQQQQQEEPLGDD). Low complexity predominate over residues 44–53 (QQQQQQQQQQ). EF-hand domains lie at 60–95 (DQLGELREIFRSFDRNGDGSLTQLELGSLLRSLGLK), 96–131 (PSTDELDSLIQRADTNSNGLIEFSEFVALVAPELLY), 136–171 (YSEDQIRRLFNIFDRDGNGFITAAELAHSMAKLGHA), and 172–207 (LTVKELTGMIKEADTDGDGRISFQEFSRAITAAAFD). Aspartate 73, asparagine 75, aspartate 77, serine 79, glutamate 84, aspartate 109, asparagine 111, asparagine 113, glutamate 120, aspartate 149, aspartate 151, asparagine 153, glutamate 160, aspartate 185, aspartate 187, aspartate 189, arginine 191, and glutamate 196 together coordinate Ca(2+).

Its function is as follows. Potential calcium sensor. The polypeptide is Probable calcium-binding protein CML11 (CML11) (Oryza sativa subsp. japonica (Rice)).